A 270-amino-acid chain; its full sequence is Sorting nexin-11 (270 aa).

Residues 16-132 (VITVRVQDPR…HLFLQSQLSV (117 aa)) form the PX domain. The a 1,2-diacyl-sn-glycero-3-phospho-(1D-myo-inositol-3-phosphate) site is built by arginine 59, lysine 85, and arginine 99. Residues 135 to 139 (IEACV) are important for membrane trafficking. Residues 168–177 (SSSHLAKGDQ) show a composition bias toward basic and acidic residues. Positions 168 to 203 (SSSHLAKGDQPKSCCFLPRSGRRSSPSPPPSEEKDH) are disordered.

Belongs to the sorting nexin family. In terms of assembly, monomer. Interacts with TRPV3; this interaction promotes TRPV3 trafficking from the cell membrane to lysosome for degradation.

Its subcellular location is the cell membrane. It localises to the endosome. The protein localises to the cytoplasm. Its function is as follows. Phosphoinositide-binding protein involved in protein sorting and membrane trafficking in endosomes. Regulates the levels of TRPV3 by promoting its trafficking from the cell membrane to lysosome for degradation. This is Sorting nexin-11 (SNX11) from Homo sapiens (Human).